Consider the following 471-residue polypeptide: Putative F-box protein At5g36200 (471 aa).

One can recognise an F-box domain in the interval 1 to 46; that stretch reads MAMSDLPNDLVEEIISRVPVKSIRAVSSTCKNWNTLSNDHSFTRKL.

In Arabidopsis thaliana (Mouse-ear cress), this protein is Putative F-box protein At5g36200.